The chain runs to 311 residues: Ribosomal protein L11 methyltransferase (311 aa).

Positions 162, 183, 205, and 248 each coordinate S-adenosyl-L-methionine.

This sequence belongs to the methyltransferase superfamily. PrmA family.

The protein localises to the cytoplasm. It catalyses the reaction L-lysyl-[protein] + 3 S-adenosyl-L-methionine = N(6),N(6),N(6)-trimethyl-L-lysyl-[protein] + 3 S-adenosyl-L-homocysteine + 3 H(+). Functionally, methylates ribosomal protein L11. The chain is Ribosomal protein L11 methyltransferase from Bacillus velezensis (strain DSM 23117 / BGSC 10A6 / LMG 26770 / FZB42) (Bacillus amyloliquefaciens subsp. plantarum).